We begin with the raw amino-acid sequence, 345 residues long: S-adenosylmethionine:tRNA ribosyltransferase-isomerase (345 aa).

Belongs to the QueA family. In terms of assembly, monomer.

It is found in the cytoplasm. It catalyses the reaction 7-aminomethyl-7-carbaguanosine(34) in tRNA + S-adenosyl-L-methionine = epoxyqueuosine(34) in tRNA + adenine + L-methionine + 2 H(+). Its pathway is tRNA modification; tRNA-queuosine biosynthesis. Functionally, transfers and isomerizes the ribose moiety from AdoMet to the 7-aminomethyl group of 7-deazaguanine (preQ1-tRNA) to give epoxyqueuosine (oQ-tRNA). This Shewanella sp. (strain W3-18-1) protein is S-adenosylmethionine:tRNA ribosyltransferase-isomerase.